Here is a 142-residue protein sequence, read N- to C-terminus: Large ribosomal subunit protein uL11 (142 aa).

A disordered region spans residues 86 to 105 (LKSGSKEPGKQSAGQISRAK).

It belongs to the universal ribosomal protein uL11 family. Part of the ribosomal stalk of the 50S ribosomal subunit. Interacts with L10 and the large rRNA to form the base of the stalk. L10 forms an elongated spine to which L12 dimers bind in a sequential fashion forming a multimeric L10(L12)X complex. Post-translationally, one or more lysine residues are methylated.

Its function is as follows. Forms part of the ribosomal stalk which helps the ribosome interact with GTP-bound translation factors. This Chelativorans sp. (strain BNC1) protein is Large ribosomal subunit protein uL11.